Reading from the N-terminus, the 1258-residue chain is Non-secreted LysM effector LysM19 (1258 aa).

The disordered stretch occupies residues 148–168 (VTQSLPNISSHEKRDDHEGNS). Positions 157-168 (SHEKRDDHEGNS) are enriched in basic and acidic residues. LysM domains lie at 1028-1073 (IVYT…SICL) and 1179-1227 (RWHV…AYCT).

The protein belongs to the secreted LysM effector family.

Non-secreted LysM effector that might be involved in manipulation of host defenses for successful infection. This Penicillium expansum (Blue mold rot fungus) protein is Non-secreted LysM effector LysM19.